A 770-amino-acid polypeptide reads, in one-letter code: Amyloid-beta precursor protein (770 aa).

Positions methionine 1–alanine 17 are cleaved as a signal peptide. The Extracellular portion of the chain corresponds to leucine 18–alanine 701. Positions leucine 28–valine 123 are GFLD subdomain. The E1 domain occupies leucine 28–leucine 189. 6 disulfide bridges follow: cysteine 38–cysteine 62, cysteine 73–cysteine 117, cysteine 98–cysteine 105, cysteine 133–cysteine 187, cysteine 144–cysteine 174, and cysteine 158–cysteine 186. Asparagine 96 to histidine 110 is a heparin binding site. Residues aspartate 131–leucine 189 are cuBD subdomain. Histidine 147, histidine 151, and tyrosine 168 together coordinate Cu(2+). The interval glycine 181 to proline 188 is zinc-binding. Residues glutamate 183, cysteine 186, and cysteine 187 each contribute to the Zn(2+) site. The segment covering aspartate 194–aspartate 207 has biased composition (acidic residues). The disordered stretch occupies residues aspartate 194–glutamate 284. Serine 198 carries the post-translational modification Phosphoserine; by CK2. Serine 206 carries the post-translational modification Phosphoserine; by CK1. 2 positions are modified to sulfotyrosine: tyrosine 217 and tyrosine 262. Residues valine 228 to glutamate 264 are compositionally biased toward acidic residues. Positions arginine 268 to glutamate 281 are enriched in low complexity. Disulfide bonds link cysteine 291–cysteine 341, cysteine 300–cysteine 324, and cysteine 316–cysteine 337. Residues cysteine 291 to cysteine 341 enclose the BPTI/Kunitz inhibitor domain. Tyrosine 336 bears the Sulfotyrosine mark. Residues valine 344–proline 365 carry the OX-2 motif. The E2 domain occupies alanine 374–leucine 565. The tract at residues phenylalanine 391–leucine 423 is heparin-binding. Serine 441 carries the post-translational modification Phosphoserine. Residues phenylalanine 491–lysine 522 form a heparin-binding region. Tyrosine 497 is subject to Phosphotyrosine. Residues alanine 523–arginine 540 are collagen-binding. 2 N-linked (GlcNAc...) asparagine glycosylation sites follow: asparagine 542 and asparagine 571. Cu(2+) contacts are provided by histidine 677, tyrosine 681, histidine 684, and histidine 685. Histidine 677, tyrosine 681, histidine 684, and histidine 685 together coordinate Zn(2+). Residues valine 695–methionine 722 are interaction with PSEN1. Residues isoleucine 702–methionine 722 traverse the membrane as a helical segment. Residues leucine 723–asparagine 770 are Cytoplasmic-facing. The short motif at lysine 724–glycine 734 is the Basolateral sorting signal element. Threonine 729 bears the Phosphothreonine mark. Residue serine 730 is modified to Phosphoserine; by APP-kinase I. Residues histidine 732–lysine 751 are interaction with G(o)-alpha. Threonine 743 is modified (phosphothreonine; by CDK5 and MAPK10). The segment at glycine 756 to asparagine 770 is required for the interaction with KIF5B and for anterograde transport in axons. Residue tyrosine 757 is modified to Phosphotyrosine; by ABL1. The short motif at tyrosine 757–tyrosine 762 is the YENPXY motif; contains endocytosis signal element. Lysine 763 is covalently cross-linked (Glycyl lysine isopeptide (Lys-Gly) (interchain with G-Cter in ubiquitin)).

It belongs to the APP family. As to quaternary structure, binds, via its C-terminus, to the PID domain of several cytoplasmic proteins, including APBB family members, the APBA family, MAPK8IP1, SHC1 and NUMB and DAB1. Binding to DAB1 inhibits its serine phosphorylation. Interacts (via NPXY motif) with DAB2 (via PID domain); the interaction is impaired by tyrosine phosphorylation of the NPXY motif. Also interacts with GPCR-like protein BPP, APPBP1, IB1, KNS2 (via its TPR domains), APPBP2 (via BaSS) and DDB1. In vitro, it binds MAPT via the MT-binding domains. Associates with microtubules in the presence of ATP and in a kinesin-dependent manner. Interacts, through a C-terminal domain, with GNAO1. Amyloid-beta protein 42 binds CHRNA7 in hippocampal neurons. Amyloid-beta associates with HADH2. Interacts with CPEB1, ANKS1B and AGER. Interacts with ITM2B. Interacts with ITM2C. Interacts with IDE. Can form homodimers; dimerization is enhanced in the presence of Cu(2+) ions. Can form homodimers; this is promoted by heparin binding. Amyloid-beta protein 40 interacts with S100A9. CTF-alpha product of APP interacts with GSAP. Isoform APP695 interacts with SORL1 (via N-terminal ectodomain); this interaction retains APP in the trans-Golgi network and reduces processing into soluble APP-alpha and amyloid-beta peptides. Isoform APP770 interacts with SORL1. The C99 fragment also interacts with SORL1. Interacts with PLD3. Interacts with VDAC1. Interacts with NSG1; could regulate APP processing. Amyloid-beta protein 42 interacts with FPR2. Interacts (via transmembrane region) with PSEN1; the interaction is direct. Interacts with LRRK2. Interacts (via cytoplasmic domain) with KIF5B. Interacts (via C-terminus) with APBB2/FE65L1 (via C-terminus). Interacts (via intracellular domain) with APBB3. Proteolytically processed under normal cellular conditions. Cleavage either by alpha-secretase, beta-secretase or theta-secretase leads to generation and extracellular release of soluble APP peptides, S-APP-alpha and S-APP-beta, and the retention of corresponding membrane-anchored C-terminal fragments, C80, C83 and C99. Subsequent processing of C80 and C83 by gamma-secretase yields P3 peptides. This is the major secretory pathway and is non-amyloidogenic. Alternatively, presenilin/nicastrin-mediated gamma-secretase processing of C99 releases the amyloid-beta proteins, amyloid-beta protein 40 and amyloid-beta protein 42, major components of amyloid plaques, and the cytotoxic C-terminal fragments, gamma-CTF(50), gamma-CTF(57) and gamma-CTF(59). PSEN1 cleavage is more efficient with C83 than with C99 as substrate (in vitro). Amyloid-beta protein 40 and Amyloid-beta protein 42 are cleaved by ACE. Many other minor amyloid-beta peptides, amyloid-beta 1-X peptides, are found in cerebral spinal fluid (CSF) including the amyloid-beta X-15 peptides, produced from the cleavage by alpha-secretase. In terms of processing, proteolytically cleaved by caspases during neuronal apoptosis. Cleavage at Asp-739 by either caspase-3, -8 or -9 results in the production of the neurotoxic C31 peptide and the increased production of amyloid-beta peptides. Post-translationally, N- and O-glycosylated. Phosphorylation in the C-terminal on tyrosine, threonine and serine residues is neuron-specific. Phosphorylation can affect APP processing, neuronal differentiation and interaction with other proteins. Phosphorylated on Thr-743 in neuronal cells by Cdc5 kinase and Mapk10, in dividing cells by Cdc2 kinase in a cell-cycle dependent manner with maximal levels at the G2/M phase and, in vitro, by GSK-3-beta. The Thr-743 phosphorylated form causes a conformational change which reduces binding of Fe65 family members. In dopaminergic (DA) neurons, phosphorylation on Thr-743 by LRKK2 promotes the production and the nuclear translocation of the APP intracellular domain (AICD) which induces DA neuron apoptosis. Phosphorylation on Tyr-757 is required for SHC binding. Phosphorylated in the extracellular domain by casein kinases on both soluble and membrane-bound APP. This phosphorylation is inhibited by heparin. In terms of processing, trophic-factor deprivation triggers the cleavage of surface APP by beta-secretase to release sAPP-beta which is further cleaved to release an N-terminal fragment of APP (N-APP). Post-translationally, amyloid-beta peptides are degraded by IDE. Sulfated on tyrosine residues.

Its subcellular location is the cell membrane. It is found in the membrane. The protein localises to the perikaryon. The protein resides in the cell projection. It localises to the growth cone. Its subcellular location is the clathrin-coated pit. It is found in the early endosome. The protein localises to the cytoplasmic vesicle. The protein resides in the endoplasmic reticulum. It localises to the golgi apparatus. Its subcellular location is the secreted. It is found in the cell surface. The protein localises to the nucleus. The protein resides in the cytoplasm. Functions as a cell surface receptor and performs physiological functions on the surface of neurons relevant to neurite growth, neuronal adhesion and axonogenesis. Interaction between APP molecules on neighboring cells promotes synaptogenesis. Involved in cell mobility and transcription regulation through protein-protein interactions. Can promote transcription activation through binding to APBB1-KAT5 and inhibit Notch signaling through interaction with Numb. Couples to apoptosis-inducing pathways such as those mediated by G(o) and JIP. Inhibits G(o)-alpha ATPase activity. Acts as a kinesin I membrane receptor, mediating the axonal transport of beta-secretase and presenilin 1. By acting as a kinesin I membrane receptor, plays a role in axonal anterograde transport of cargo towards synapses in axons. May be involved in copper homeostasis/oxidative stress through copper ion reduction. In vitro, copper-metallated APP induces neuronal death directly or is potentiated through Cu(2+)-mediated low-density lipoprotein oxidation. Can regulate neurite outgrowth through binding to components of the extracellular matrix such as heparin and collagen I and IV. Induces a AGER-dependent pathway that involves activation of p38 MAPK, resulting in internalization of amyloid-beta peptide and mitochondrial dysfunction in cultured cortical neurons. Provides Cu(2+) ions for GPC1 which are required for release of nitric oxide (NO) and subsequent degradation of the heparan sulfate chains on GPC1. In terms of biological role, amyloid-beta peptides are lipophilic metal chelators with metal-reducing activity. Binds transient metals such as copper, zinc and iron. Its function is as follows. The gamma-CTF peptides as well as the caspase-cleaved peptides, including C31, are potent enhancers of neuronal apoptosis. The protein is Amyloid-beta precursor protein of Macaca fascicularis (Crab-eating macaque).